A 227-amino-acid polypeptide reads, in one-letter code: MKINILTLFPRYFEVFCRESIIGKAIKQKKITINVVNFRDFSKNKHKKVDDYVYGGGPGLLLQIQPVVDALEKVGGLKIALSPQGQKFDQSVARKLAKEDEITILCGHYEGFDQRIIDNFIDFELSLGDFILTGGEIAAMAIIDAIIRLKPDIINPESLKNETFNDFLLDFPQYSRPANFRGLEVPKVLISGNHREIGEWRQEQRELITKKKRPDLWEKFLKIKNKK.

Residues Gly-107 and 127 to 132 (LGDFIL) each bind S-adenosyl-L-methionine.

The protein belongs to the RNA methyltransferase TrmD family. In terms of assembly, homodimer.

The protein resides in the cytoplasm. It carries out the reaction guanosine(37) in tRNA + S-adenosyl-L-methionine = N(1)-methylguanosine(37) in tRNA + S-adenosyl-L-homocysteine + H(+). Specifically methylates guanosine-37 in various tRNAs. This chain is tRNA (guanine-N(1)-)-methyltransferase, found in Mesomycoplasma hyopneumoniae (strain 7448) (Mycoplasma hyopneumoniae).